A 130-amino-acid chain; its full sequence is MAQAQYAGTGRRKNAVARVRLVPGTGKITVNKKDVEEYIPHADLRLIINQPFAVTSTEGSYDVFVNVVGGGYGGQSGAIRHGIARALLQVDPDFRDSLKRAGLLTRDARMVERKKPGLKKARKASQFSKR.

This sequence belongs to the universal ribosomal protein uS9 family.

This Streptococcus pyogenes serotype M1 protein is Small ribosomal subunit protein uS9.